Reading from the N-terminus, the 174-residue chain is MLQEPSAAFSLRRNSFRRRSPRSNVDDRGWNPLHIKARKGDLKSVKQLLDQGMDVNALAWGPKSKGVSALHLAAEGGHIEVMDLLLERGANIDAKTWGSCGWTPLHAAAKERKREAVKFLVENGAFLADDITDTRFNPPVHYCHGLEWAYEEMKKLNSESSSSSGGDTSSSSDN.

Residues 1-13 (MLQEPSAAFSLRR) are compositionally biased toward low complexity. The interval 1–29 (MLQEPSAAFSLRRNSFRRRSPRSNVDDRG) is disordered. S15 carries the post-translational modification Phosphoserine. ANK repeat units lie at residues 28-57 (RGWN…DVNA), 65-94 (KGVS…NIDA), and 100-129 (CGWT…FLAD).

Interacts with phytochrome A (PHYA), both in Pr and Pfr forms. Binds to PIF3, a repressor of photomorphogenesis in response to phytochrome-mediated light signaling; this interaction may trigger the repression of PHYA-mediated PIF3 phosphorylation. Interacts with SIGE/SIG5 in mitochondrion. Interacts with RPS9M (via C terminus). In terms of processing, phosphorylated by PHYA. In terms of tissue distribution, mostly expressed in flowers, cotyledons, leaves and siliques, and, to a lower extent, in roots and stems. Also detected at low levels in seedlings grown in continuous dark or light conditions. Expressed in male and female gametophytes.

The protein localises to the cytoplasm. Its subcellular location is the nucleus. It localises to the mitochondrion. Promotes anthocyanin accumulation through interaction with PHYA, especially in response to far-red light, high light and sucrose treatment, probably by triggering A3G2XYLT/UF3GT expression. Required for gametophytes development as well as male-female gamete recognition during fertilization, possibly by regulating mitochondrial gene expression. Represses PHYA-mediated PIF3 phosphorylation. In Arabidopsis thaliana (Mouse-ear cress), this protein is Phytochrome-interacting ankyrin-repeat protein 2.